Here is a 1210-residue protein sequence, read N- to C-terminus: A disintegrin and metalloproteinase with thrombospondin motifs 19 (1210 aa).

Residues 1 to 30 form the signal peptide; it reads MGPEMRLTRICCCCCLLYQLGFLSHGTTSG. A propeptide spanning residues 31-319 is cleaved from the precursor; that stretch reads LQLTPDLEEW…KIADNRREKR (289 aa). A glycan (N-linked (GlcNAc...) asparagine) is linked at N54. The disordered stretch occupies residues 55-166; the sequence is ATGLSGGSSD…PAQQEEPSAE (112 aa). The segment covering 69–78 has biased composition (gly residues); the sequence is RSSGGGGRGQ. A compositionally biased stretch (basic and acidic residues) spans 84–98; that stretch reads REVRSVARAPQEEAT. Over residues 113–122 the composition is skewed to acidic residues; it reads GAEDEEELES. Polar residues predominate over residues 130 to 139; the sequence is SGDTALSSGT. The segment covering 143–158 has biased composition (pro residues); that stretch reads WQPPLPPQRPSSPPPA. N263 is a glycosylation site (N-linked (GlcNAc...) asparagine). The Cysteine switch motif lies at 295–302; the sequence is HHCGVISD. C297 contributes to the Zn(2+) binding site. The 221-residue stretch at 328–548 folds into the Peptidase M12B domain; it reads YNIETVVVAD…KASSCLLHTD (221 aa). 11 disulfide bridges follow: C404–C469, C444–C451, C463–C543, C502–C527, C572–C596, C583–C604, C591–C623, C617–C628, C648–C683, C652–C688, and C663–C673. H485 contributes to the Zn(2+) binding site. The active site involves E486. H489 and H495 together coordinate Zn(2+). The Disintegrin domain maps to 549–636; that stretch reads PQSLSSVLVP…ECTRRTPAPE (88 aa). The region spanning 637-689 is the TSP type-1 1 domain; the sequence is HLAGEWSPWSSCSRSCSSGVSSRERKCPGLGSEARDCNGPRKQYRICENPPCP. A spacer region spans residues 794–917; sequence VIKGDFNHTR…PDNQSSKEPG (124 aa). N800, N910, N931, N952, and N1012 each carry an N-linked (GlcNAc...) asparagine glycan. TSP type-1 domains lie at 918–978, 979–1040, 1042–1086, and 1090–1147; these read PLFM…NEQP, CQTR…QDCM, VWEA…EDCE, and KCYV…QPCN. 3 disulfide bridges follow: C991–C1034, C995–C1039, and C1006–C1023. The 40-residue stretch at 1163-1202 folds into the PLAC domain; it reads LTFKCLGDQWPVYCRVIREKNLCQDMRWYQRCCETCRDFY.

Zn(2+) is required as a cofactor. The precursor is cleaved by a furin endopeptidase. Post-translationally, glycosylated. Can be O-fucosylated by POFUT2 on a serine or a threonine residue found within the consensus sequence C1-X(2)-(S/T)-C2-G of the TSP type-1 repeat domains where C1 and C2 are the first and second cysteine residue of the repeat, respectively. Fucosylated repeats can then be further glycosylated by the addition of a beta-1,3-glucose residue by the glucosyltransferase, B3GALTL. Fucosylation mediates the efficient secretion of ADAMTS family members. Can also be C-glycosylated with one or two mannose molecules on tryptophan residues within the consensus sequence W-X-X-W of the TPRs, and N-glycosylated. These other glycosylations can also facilitate secretion. Expressed predominantly in fetal ovary, low levels of expression is also detected in kidney, heart, skeletal muscle, lung and testis.

It is found in the secreted. The protein resides in the extracellular space. The protein localises to the extracellular matrix. This is A disintegrin and metalloproteinase with thrombospondin motifs 19 (Adamts19) from Mus musculus (Mouse).